The primary structure comprises 643 residues: Phosphomethylpyrimidine synthase (643 aa).

Substrate-binding positions include asparagine 248, methionine 277, tyrosine 306, histidine 342, 362–364, 403–406, and glutamate 442; these read SRG and DGLR. Histidine 446 is a binding site for Zn(2+). Tyrosine 469 contributes to the substrate binding site. Histidine 510 contributes to the Zn(2+) binding site. Residues cysteine 590, cysteine 593, and cysteine 598 each contribute to the [4Fe-4S] cluster site.

It belongs to the ThiC family. In terms of assembly, homodimer. [4Fe-4S] cluster serves as cofactor.

The enzyme catalyses 5-amino-1-(5-phospho-beta-D-ribosyl)imidazole + S-adenosyl-L-methionine = 4-amino-2-methyl-5-(phosphooxymethyl)pyrimidine + CO + 5'-deoxyadenosine + formate + L-methionine + 3 H(+). Its pathway is cofactor biosynthesis; thiamine diphosphate biosynthesis. Functionally, catalyzes the synthesis of the hydroxymethylpyrimidine phosphate (HMP-P) moiety of thiamine from aminoimidazole ribotide (AIR) in a radical S-adenosyl-L-methionine (SAM)-dependent reaction. The sequence is that of Phosphomethylpyrimidine synthase from Burkholderia cenocepacia (strain HI2424).